The sequence spans 71 residues: Small ribosomal subunit protein bS21 (71 aa).

The segment at 47–71 (RENATRAKRHAKRVARENARNTRLY) is disordered. Residues 60 to 71 (VARENARNTRLY) show a composition bias toward basic and acidic residues.

This sequence belongs to the bacterial ribosomal protein bS21 family.

The polypeptide is Small ribosomal subunit protein bS21 (Actinobacillus succinogenes (strain ATCC 55618 / DSM 22257 / CCUG 43843 / 130Z)).